We begin with the raw amino-acid sequence, 729 residues long: Phosphoribosylformylglycinamidine synthase subunit PurL (729 aa).

H54 is a catalytic residue. ATP contacts are provided by Y57 and K96. E98 contacts Mg(2+). Substrate-binding positions include 99-102 (SHNH) and R121. H100 (proton acceptor) is an active-site residue. Residue D122 participates in Mg(2+) binding. Q245 contacts substrate. D273 contributes to the Mg(2+) binding site. A substrate-binding site is contributed by 317–319 (ETQ). Residues D495 and G532 each contribute to the ATP site. N533 is a binding site for Mg(2+). S535 contacts substrate.

The protein belongs to the FGAMS family. Monomer. Part of the FGAM synthase complex composed of 1 PurL, 1 PurQ and 2 PurS subunits.

It localises to the cytoplasm. The enzyme catalyses N(2)-formyl-N(1)-(5-phospho-beta-D-ribosyl)glycinamide + L-glutamine + ATP + H2O = 2-formamido-N(1)-(5-O-phospho-beta-D-ribosyl)acetamidine + L-glutamate + ADP + phosphate + H(+). It participates in purine metabolism; IMP biosynthesis via de novo pathway; 5-amino-1-(5-phospho-D-ribosyl)imidazole from N(2)-formyl-N(1)-(5-phospho-D-ribosyl)glycinamide: step 1/2. Part of the phosphoribosylformylglycinamidine synthase complex involved in the purines biosynthetic pathway. Catalyzes the ATP-dependent conversion of formylglycinamide ribonucleotide (FGAR) and glutamine to yield formylglycinamidine ribonucleotide (FGAM) and glutamate. The FGAM synthase complex is composed of three subunits. PurQ produces an ammonia molecule by converting glutamine to glutamate. PurL transfers the ammonia molecule to FGAR to form FGAM in an ATP-dependent manner. PurS interacts with PurQ and PurL and is thought to assist in the transfer of the ammonia molecule from PurQ to PurL. In Staphylococcus aureus (strain USA300), this protein is Phosphoribosylformylglycinamidine synthase subunit PurL.